Reading from the N-terminus, the 551-residue chain is Chaperonin GroEL 4 (551 aa).

ATP-binding positions include 30–33, lysine 51, 87–91, glycine 415, and aspartate 495; these read TLGP and DGTTT.

Belongs to the chaperonin (HSP60) family. As to quaternary structure, forms a cylinder of 14 subunits composed of two heptameric rings stacked back-to-back. Interacts with the co-chaperonin GroES.

It is found in the cytoplasm. It carries out the reaction ATP + H2O + a folded polypeptide = ADP + phosphate + an unfolded polypeptide.. Its function is as follows. Together with its co-chaperonin GroES, plays an essential role in assisting protein folding. The GroEL-GroES system forms a nano-cage that allows encapsulation of the non-native substrate proteins and provides a physical environment optimized to promote and accelerate protein folding. This Mesorhizobium japonicum (strain LMG 29417 / CECT 9101 / MAFF 303099) (Mesorhizobium loti (strain MAFF 303099)) protein is Chaperonin GroEL 4.